Reading from the N-terminus, the 348-residue chain is Enkurin domain-containing protein 1 (348 aa).

3 disordered regions span residues 1-65 (MCEG…RPGG), 84-195 (GGIS…PSAK), and 262-282 (AEAR…TRMP). Position 93 is a phosphoserine (Ser-93). The segment covering 95 to 127 (KRKDPKDHEKENMRRIREIQRRFREQEHSREQG) has biased composition (basic and acidic residues). Ser-138 is subject to Phosphoserine. The segment covering 139–148 (PKYDKVESRV) has biased composition (basic and acidic residues). An Enkurin domain is found at 253–345 (ERRDLWRREA…IFSRPKVFVK (93 aa)).

As to quaternary structure, interacts with alpha-tubulin. Interacts (via central region) with CCP110 (via N-terminal region); competes with CEP97 for binding to CCP110.

The protein resides in the cytoplasm. Its subcellular location is the cytoskeleton. It is found in the microtubule organizing center. It localises to the centrosome. The protein localises to the centriole. The protein resides in the cilium basal body. Its subcellular location is the cell projection. It is found in the cilium. It localises to the spindle. The protein localises to the spindle pole. The protein resides in the cilium axoneme. Functionally, microtubule-binding protein which regulates microtubule organization and stability. Promotes the stability of astral microtubules and facilitates the proper orientation of the mitotic spindle. This allows the oriented division of basal keratinocytes and contributes to epidermal stratification. Required for the assembly of both primary and motile cilia. Destabilizes the interaction between CCP110 and CEP97 by competing with CEP97 for binding to CCP110 which promotes the removal of CCP110 and CEP97 from the mother centriole and allows the initiation of ciliogenesis. This chain is Enkurin domain-containing protein 1 (ENKD1), found in Bos taurus (Bovine).